Consider the following 77-residue polypeptide: DNA-directed RNA polymerase subunit Rpo10 (77 aa).

4 residues coordinate Zn(2+): C7, C10, C44, and C45.

This sequence belongs to the archaeal Rpo10/eukaryotic RPB10 RNA polymerase subunit family. Part of the RNA polymerase complex. Requires Zn(2+) as cofactor.

The protein resides in the cytoplasm. It catalyses the reaction RNA(n) + a ribonucleoside 5'-triphosphate = RNA(n+1) + diphosphate. Its function is as follows. DNA-dependent RNA polymerase (RNAP) catalyzes the transcription of DNA into RNA using the four ribonucleoside triphosphates as substrates. This Aeropyrum pernix (strain ATCC 700893 / DSM 11879 / JCM 9820 / NBRC 100138 / K1) protein is DNA-directed RNA polymerase subunit Rpo10.